We begin with the raw amino-acid sequence, 912 residues long: Metabotropic glutamate receptor 4 (912 aa).

The first 32 residues, 1–32 (MSGKGGWAWWWARLPLCLLLSLYGSWVPSSLG), serve as a signal peptide directing secretion. The Extracellular segment spans residues 33–586 (KPKGHPHMNS…PIVKLEWDSP (554 aa)). Cys67 and Cys109 are disulfide-bonded. Asn98 carries N-linked (GlcNAc...) asparagine glycosylation. L-glutamate contacts are provided by residues Ser159, 180 to 182 (AST), and Tyr230. Cystine bridges form between Cys249–Cys538, Cys372–Cys388, Cys428–Cys435, Cys520–Cys539, Cys524–Cys542, Cys545–Cys557, and Cys560–Cys573. N-linked (GlcNAc...) asparagine glycosylation occurs at Asn301. An L-glutamate-binding site is contributed by Asp312. Lys405 serves as a coordination point for L-glutamate. A helical transmembrane segment spans residues 587-607 (WAVLPLFLAVVGIAATLFVVV). Topologically, residues 608–624 (TFVRYNDTPIVKASGRE) are cytoplasmic. A helical transmembrane segment spans residues 625–645 (LSYVLLAGIFLCYATTFLMIA). The Extracellular segment spans residues 646-653 (EPDLGTCS). The chain crosses the membrane as a helical span at residues 654 to 671 (LRRIFLGLGMSISYAALL). At 672–699 (TKTNRIYRIFEQGKRSVSAPRFISPASQ) the chain is on the cytoplasmic side. The helical transmembrane segment at 700–720 (LAITFVLISLQLLCICVWFVV) threads the bilayer. Residues 721–751 (DPSHSVVDFQDQRTLDPRFARGVLKCDISDL) are Extracellular-facing. A helical membrane pass occupies residues 752–772 (SLICLLGYSMLLMVTCTVYAI). The Cytoplasmic segment spans residues 773-786 (KTRGVPETFNEAKP). The helical transmembrane segment at 787–807 (IGFTMYTTCIVWLAFIPIFFG) threads the bilayer. Topologically, residues 808–826 (TSQSADKLYIQTTTLTVSV) are extracellular. A helical membrane pass occupies residues 827 to 847 (SLSASVSLGMLYMPKVYIILF). At 848–912 (HPEQNVPKRK…TYVTYTNHAI (65 aa)) the chain is on the cytoplasmic side.

The protein belongs to the G-protein coupled receptor 3 family. In terms of assembly, interacts with PICK1.

It is found in the cell membrane. In terms of biological role, G-protein coupled receptor for glutamate. Ligand binding causes a conformation change that triggers signaling via guanine nucleotide-binding proteins (G proteins) and modulates the activity of down-stream effectors. Signaling inhibits adenylate cyclase activity. The sequence is that of Metabotropic glutamate receptor 4 (Grm4) from Mus musculus (Mouse).